Consider the following 140-residue polypeptide: Small ribosomal subunit protein uS12 (140 aa).

D102 bears the 3-methylthioaspartic acid mark.

This sequence belongs to the universal ribosomal protein uS12 family. Part of the 30S ribosomal subunit. Contacts proteins S8 and S17. May interact with IF1 in the 30S initiation complex.

Functionally, with S4 and S5 plays an important role in translational accuracy. Its function is as follows. Interacts with and stabilizes bases of the 16S rRNA that are involved in tRNA selection in the A site and with the mRNA backbone. Located at the interface of the 30S and 50S subunits, it traverses the body of the 30S subunit contacting proteins on the other side and probably holding the rRNA structure together. The combined cluster of proteins S8, S12 and S17 appears to hold together the shoulder and platform of the 30S subunit. This Geobacillus stearothermophilus (Bacillus stearothermophilus) protein is Small ribosomal subunit protein uS12.